The following is a 335-amino-acid chain: MTGTSLAATYGPIAGADLEAELAQPRTADGDAQDAAVLERDGGAHALPFASGGAFGRAPRDDDDDRRGAGDASVRLTRVSKRYGERTVLADVDLAIERGGFVSIVGRSGCGKSTLLRLVAELETPSAGTLVKRGDGGGVLDTRIMYQDARLLPWKTVLQNVMLGLGRRAKDDARAVLDEVGLLARAHDWPAQLSGGQRQRVALARALVHRPQLLLLDEPLGALDALTRIEMHELIERLWREHRFTALLVTHDVQEAVSLADRILLIEAGRIAFDQPVPLERPRARASAAFAELEDRVLQRVLTGSDPAGATSAAASAGGAARGRAAQANGLRWAV.

Positions proline 48–aspartate 71 are disordered. The 220-residue stretch at valine 74–leucine 293 folds into the ABC transporter domain. Glycine 106 to serine 113 contacts ATP.

Belongs to the ABC transporter superfamily. Aliphatic sulfonates importer (TC 3.A.1.17.2) family. The complex is composed of two ATP-binding proteins (SsuB), two transmembrane proteins (SsuC) and a solute-binding protein (SsuA).

The protein localises to the cell inner membrane. The catalysed reaction is ATP + H2O + aliphatic sulfonate-[sulfonate-binding protein]Side 1 = ADP + phosphate + aliphatic sulfonateSide 2 + [sulfonate-binding protein]Side 1.. In terms of biological role, part of the ABC transporter complex SsuABC involved in aliphatic sulfonates import. Responsible for energy coupling to the transport system. The chain is Aliphatic sulfonates import ATP-binding protein SsuB from Burkholderia thailandensis (strain ATCC 700388 / DSM 13276 / CCUG 48851 / CIP 106301 / E264).